A 369-amino-acid chain; its full sequence is Erythronate-4-phosphate dehydrogenase (369 aa).

Ser45 and Thr66 together coordinate substrate. Residue Asp146 coordinates NAD(+). Arg209 is an active-site residue. Asp233 is an NAD(+) binding site. The active site involves Glu238. His255 serves as the catalytic Proton donor. NAD(+) is bound at residue Gly258.

Belongs to the D-isomer specific 2-hydroxyacid dehydrogenase family. PdxB subfamily. Homodimer.

The protein resides in the cytoplasm. The catalysed reaction is 4-phospho-D-erythronate + NAD(+) = (R)-3-hydroxy-2-oxo-4-phosphooxybutanoate + NADH + H(+). Its pathway is cofactor biosynthesis; pyridoxine 5'-phosphate biosynthesis; pyridoxine 5'-phosphate from D-erythrose 4-phosphate: step 2/5. Its function is as follows. Catalyzes the oxidation of erythronate-4-phosphate to 3-hydroxy-2-oxo-4-phosphonooxybutanoate. The sequence is that of Erythronate-4-phosphate dehydrogenase from Porphyromonas gingivalis (strain ATCC BAA-308 / W83).